An 83-amino-acid polypeptide reads, in one-letter code: RNA-binding protein Hfq (83 aa).

Residues 9–69 enclose the Sm domain; that stretch reads DQLLNTARKE…ISTIIPAKPI (61 aa).

The protein belongs to the Hfq family. Homohexamer.

RNA chaperone that binds small regulatory RNA (sRNAs) and mRNAs to facilitate mRNA translational regulation in response to envelope stress, environmental stress and changes in metabolite concentrations. Also binds with high specificity to tRNAs. The chain is RNA-binding protein Hfq from Leptospira biflexa serovar Patoc (strain Patoc 1 / Ames).